The chain runs to 785 residues: Sexual differentiation process protein isp4 (785 aa).

The interval 1 to 28 (MIGSINESPIEEHMNDSPSTKEKADSVD) is disordered. Positions 10-26 (IEEHMNDSPSTKEKADS) are enriched in basic and acidic residues. The next 16 helical transmembrane spans lie at 94–114 (MWTIGLIYSTVGAAVNMFFSL), 121–141 (LSVLISELLAYPALQIWDLIF), 167–187 (LIVVMSSVSFGNAYSTDIILA), 196–216 (FGFGYEICLTLATQLIGYGLA), 264–284 (FFLYVFIASFIWNWFPSYIFQ), 339–359 (LMNILLGVILFFWIVTPALNF), 413–433 (ALAFGLSFASITSVIFHVILY), 461–481 (VPFYWYLSVFLAFFGMMMGTI), 490–510 (WWVIIVGVIFSAVWFIPIGIV), 512–532 (AITNIQLGLNVFTEFIVGYMY), 537–557 (LAMMIFKTVGYITMTQGLAFA), 572–592 (IMFYTQMIATIWSCFVQIGVL), 611–631 (YTCPNATVFFNSSVIWGVIGP), 642–662 (TGLQYFWLAGVLGTILFWALW), 683–703 (GYIPPATPVNYLAWSGIGLFF), and 732–752 (LSVIILFFCLQLPMVNFPDWW).

It belongs to the oligopeptide OPT transporter family.

Its subcellular location is the endoplasmic reticulum membrane. This chain is Sexual differentiation process protein isp4 (isp4), found in Schizosaccharomyces pombe (strain 972 / ATCC 24843) (Fission yeast).